We begin with the raw amino-acid sequence, 599 residues long: Elongation factor 4 (599 aa).

Positions 5-187 (KNIRNFSIIA…QLVERIPAPE (183 aa)) constitute a tr-type G domain. GTP contacts are provided by residues 17-22 (DHGKST) and 134-137 (NKID).

This sequence belongs to the TRAFAC class translation factor GTPase superfamily. Classic translation factor GTPase family. LepA subfamily.

The protein resides in the cell inner membrane. It catalyses the reaction GTP + H2O = GDP + phosphate + H(+). Required for accurate and efficient protein synthesis under certain stress conditions. May act as a fidelity factor of the translation reaction, by catalyzing a one-codon backward translocation of tRNAs on improperly translocated ribosomes. Back-translocation proceeds from a post-translocation (POST) complex to a pre-translocation (PRE) complex, thus giving elongation factor G a second chance to translocate the tRNAs correctly. Binds to ribosomes in a GTP-dependent manner. This Alcanivorax borkumensis (strain ATCC 700651 / DSM 11573 / NCIMB 13689 / SK2) protein is Elongation factor 4.